The primary structure comprises 866 residues: Sphingomyelin phosphodiesterase 4 (866 aa).

Ser169 and Ser285 each carry phosphoserine. Thr708 is subject to Phosphothreonine. Position 792 is a phosphoserine (Ser792). The chain crosses the membrane as a helical span at residues 822–842 (LLLAFFVASLFCVGPLPCTLL).

Mg(2+) is required as a cofactor. Widely expressed, with highest levels in heart and skeletal muscle. In terms of tissue distribution, expressed in skeletal muscle (at protein level). As to expression, expressed in skeletal muscle but a lower levels than isoform 1 (at protein level).

The protein resides in the endoplasmic reticulum membrane. It localises to the golgi apparatus membrane. Its subcellular location is the nucleus envelope. It is found in the cell membrane. The protein localises to the sarcolemma. It catalyses the reaction a sphingomyelin + H2O = phosphocholine + an N-acylsphing-4-enine + H(+). With respect to regulation, activated by phosphatidylserine and tumor necrosis factor (TNF). Inhibited by scyphostatin. Catalyzes the hydrolysis of membrane sphingomyelin to form phosphorylcholine and ceramide. It has a relevant role in the homeostasis of membrane sphingolipids, thereby influencing membrane integrity, and endoplasmic reticulum organization and function. May sensitize cells to DNA damage-induced apoptosis. In skeletal muscle, mediates TNF-stimulated oxidant production. This is Sphingomyelin phosphodiesterase 4 from Homo sapiens (Human).